Reading from the N-terminus, the 600-residue chain is Mitoguardin 1 (600 aa).

Helical transmembrane passes span 15 to 32 (TYAVRVFALPVSWYYSLS) and 38 to 58 (PVAKKLFMVTAVSAVSVIFLA). Phosphoserine is present on residues Ser257 and Ser261.

It belongs to the mitoguardin family. In terms of assembly, homodimer and heterodimer; forms heterodimers with MIGA2. Interacts with PLD6/MitoPLD.

Its subcellular location is the mitochondrion outer membrane. In terms of biological role, regulator of mitochondrial fusion. Acts by forming homo- and heterodimers at the mitochondrial outer membrane and facilitating the formation of PLD6/MitoPLD dimers. May act by regulating phospholipid metabolism via PLD6/MitoPLD. In Mus musculus (Mouse), this protein is Mitoguardin 1.